The chain runs to 27 residues: GFGMLFKFLAKKVAKKLVSHVAQKQLE.

E27 is modified (glutamic acid 1-amide).

In terms of tissue distribution, expressed by the venom gland.

The protein localises to the secreted. The sequence is that of Cupiennin-4a from Cupiennius salei (American wandering spider).